We begin with the raw amino-acid sequence, 271 residues long: Tryptophan synthase alpha chain (271 aa).

Residues glutamate 49 and aspartate 60 each act as proton acceptor in the active site.

The protein belongs to the TrpA family. In terms of assembly, tetramer of two alpha and two beta chains.

The catalysed reaction is (1S,2R)-1-C-(indol-3-yl)glycerol 3-phosphate + L-serine = D-glyceraldehyde 3-phosphate + L-tryptophan + H2O. The protein operates within amino-acid biosynthesis; L-tryptophan biosynthesis; L-tryptophan from chorismate: step 5/5. The alpha subunit is responsible for the aldol cleavage of indoleglycerol phosphate to indole and glyceraldehyde 3-phosphate. This is Tryptophan synthase alpha chain from Buchnera aphidicola subsp. Schizaphis graminum (strain Sg).